Consider the following 144-residue polypeptide: Ribonuclease H (144 aa).

Residues 1–141 (MKKVEIFTDG…ADRLASEAAD (141 aa)) form the RNase H type-1 domain. Positions 9, 47, 69, and 133 each coordinate Mg(2+).

Belongs to the RNase H family. As to quaternary structure, monomer. Mg(2+) is required as a cofactor.

It is found in the cytoplasm. The catalysed reaction is Endonucleolytic cleavage to 5'-phosphomonoester.. In terms of biological role, endonuclease that specifically degrades the RNA of RNA-DNA hybrids. The polypeptide is Ribonuclease H (Erythrobacter litoralis (strain HTCC2594)).